We begin with the raw amino-acid sequence, 728 residues long: Beta-porphyranase A (728 aa).

A signal peptide spans 1–22 (MSYKYIFLLSAFTLGVPPGIYC). Substrate-binding residues include His53, Lys76, Trp78, Lys87, His114, and Asn151. The active-site Proton donor is the Glu152. The substrate site is built by His235, Glu279, Ser326, and Trp331. The Nucleophile role is filled by Glu279. The CBM-cenC domain occupies 599-701 (TLQNGTFSEG…AVSFDFNSTV (103 aa)).

This sequence belongs to the glycosyl hydrolase 86 family.

It carries out the reaction Hydrolysis of beta-D-galactopyranose-(1-&gt;4)-alpha-L-galactopyranose-6-sulfate linkages in porphyran.. Cleaves the sulfated polysaccharide porphyran at the (1-&gt;4) linkages between beta-D-galactopyranose and alpha-L-galactopyranose-6-sulfate, forming mostly the disaccharide alpha-L-galactopyranose-6-sulfate-(1-&gt;3)-beta-D-galactose. Some longer oligosaccharides of even number of residues are also observed. Inactive on the non-sulfated agarose portion of the porphyran backbone. Can also use methylated galactoses. This chain is Beta-porphyranase A, found in Phocaeicola plebeius (strain DSM 17135 / JCM 12973 / CCUG 54634 / M2) (Bacteroides plebeius).